Here is a 72-residue protein sequence, read N- to C-terminus: Translation initiation factor IF-1 (72 aa).

An S1-like domain is found at Met1 to Arg72.

It belongs to the IF-1 family. In terms of assembly, component of the 30S ribosomal translation pre-initiation complex which assembles on the 30S ribosome in the order IF-2 and IF-3, IF-1 and N-formylmethionyl-tRNA(fMet); mRNA recruitment can occur at any time during PIC assembly.

The protein localises to the cytoplasm. Functionally, one of the essential components for the initiation of protein synthesis. Stabilizes the binding of IF-2 and IF-3 on the 30S subunit to which N-formylmethionyl-tRNA(fMet) subsequently binds. Helps modulate mRNA selection, yielding the 30S pre-initiation complex (PIC). Upon addition of the 50S ribosomal subunit IF-1, IF-2 and IF-3 are released leaving the mature 70S translation initiation complex. The polypeptide is Translation initiation factor IF-1 (Shewanella pealeana (strain ATCC 700345 / ANG-SQ1)).